The primary structure comprises 299 residues: MIRRQKYGDEIAKAQVLIEALPYIKKFSGKTVVIKYGGSAMLDCNLKRMVMQDIVLMKFVGLNPIVVHGGGPEINKMLERLGIESKFVNGLRVTDEATMEIVEMVLTGRINKEIVSLINELGGQAIGVSGKDGRLLKAEKDTSNGDIGYVGKIVDVNIDVITMMLEKGYIPVIAPTSFGDDGKTYNVNADTAAGKIAEALKAEKLILLTDVEGILSNINDKSSLISRMDLEHAKEFMNSGRINGGMIPKLECCIKAVENGVKRAHIIDGRLTHSLLLEIFTDEGIGTMIGKECFDDDNL.

Residues 70-71 (GG), Arg-92, and Asn-186 each bind substrate.

Belongs to the acetylglutamate kinase family. ArgB subfamily.

Its subcellular location is the cytoplasm. The catalysed reaction is N-acetyl-L-glutamate + ATP = N-acetyl-L-glutamyl 5-phosphate + ADP. The protein operates within amino-acid biosynthesis; L-arginine biosynthesis; N(2)-acetyl-L-ornithine from L-glutamate: step 2/4. Functionally, catalyzes the ATP-dependent phosphorylation of N-acetyl-L-glutamate. This Thermoanaerobacter pseudethanolicus (strain ATCC 33223 / 39E) (Clostridium thermohydrosulfuricum) protein is Acetylglutamate kinase.